Here is a 369-residue protein sequence, read N- to C-terminus: Flagellar P-ring protein 1 (369 aa).

Positions 1-23 (MRKQSLVTLLMVLLSLVWLPASA) are cleaved as a signal peptide.

It belongs to the FlgI family. The basal body constitutes a major portion of the flagellar organelle and consists of four rings (L,P,S, and M) mounted on a central rod.

It localises to the periplasm. The protein localises to the bacterial flagellum basal body. Its function is as follows. Assembles around the rod to form the L-ring and probably protects the motor/basal body from shearing forces during rotation. The polypeptide is Flagellar P-ring protein 1 (Yersinia pseudotuberculosis serotype I (strain IP32953)).